A 110-amino-acid polypeptide reads, in one-letter code: Bowman-Birk type proteinase inhibitor (110 aa).

Positions 1–19 are cleaved as a signal peptide; sequence MVVLKVCLVLLFLVGGTTS. The propeptide occupies 20-39; it reads ANLRLSKLGLLMKSDHQHSN. 7 disulfide bridges follow: cysteine 47–cysteine 101, cysteine 48–cysteine 63, cysteine 51–cysteine 97, cysteine 53–cysteine 61, cysteine 71–cysteine 78, cysteine 75–cysteine 90, and cysteine 80–cysteine 88.

This sequence belongs to the Bowman-Birk serine protease inhibitor family.

Functionally, inhibitor of trypsin and of chymotrypsin. The sequence is that of Bowman-Birk type proteinase inhibitor from Glycine max (Soybean).